Consider the following 371-residue polypeptide: Ferrochelatase (371 aa).

Residues histidine 218 and glutamate 299 each coordinate Fe cation.

Belongs to the ferrochelatase family.

It is found in the cytoplasm. The enzyme catalyses heme b + 2 H(+) = protoporphyrin IX + Fe(2+). It functions in the pathway porphyrin-containing compound metabolism; protoheme biosynthesis; protoheme from protoporphyrin-IX: step 1/1. In terms of biological role, catalyzes the ferrous insertion into protoporphyrin IX. This is Ferrochelatase from Cupriavidus necator (strain ATCC 17699 / DSM 428 / KCTC 22496 / NCIMB 10442 / H16 / Stanier 337) (Ralstonia eutropha).